A 639-amino-acid chain; its full sequence is Mediator of RNA polymerase II transcription subunit 17 (639 aa).

The stretch at 160–187 (RLQSFNAAADKLLKSASRLENEVASETR) forms a coiled coil.

Belongs to the Mediator complex subunit 17 family. As to quaternary structure, component of the Mediator complex.

It is found in the nucleus. In terms of biological role, component of the Mediator complex, a coactivator involved in the regulated transcription of nearly all RNA polymerase II-dependent genes. Mediator functions as a bridge to convey information from gene-specific regulatory proteins to the basal RNA polymerase II transcription machinery. Mediator is recruited to promoters by direct interactions with regulatory proteins and serves as a scaffold for the assembly of a functional preinitiation complex with RNA polymerase II and the general transcription factors. In Aspergillus fumigatus (strain ATCC MYA-4609 / CBS 101355 / FGSC A1100 / Af293) (Neosartorya fumigata), this protein is Mediator of RNA polymerase II transcription subunit 17 (srb4).